Consider the following 460-residue polypeptide: Cyclin-A1-1 (460 aa).

2 disordered regions span residues 1–52 (MSNI…ITNQ) and 95–126 (PHKVASSPSKSDDGSVSMDETRSSSDSYKSPQ). Composition is skewed to low complexity over residues 10–19 (SSFSSSTKSS) and 100–111 (SSPSKSDDGSVS).

This sequence belongs to the cyclin family. Cyclin AB subfamily. As to quaternary structure, interacts with FZR2/CCS52A1, FZR1/CCS52A2 and FZR3/CCS52B.

This Arabidopsis thaliana (Mouse-ear cress) protein is Cyclin-A1-1 (CYCA1-1).